Reading from the N-terminus, the 579-residue chain is MSGTLVRMAGPTVVAEGLAGASLNEVVRVGEERLLGEIIRIEGDRATIQVYEETAGLALGEPVEASGEPLAVELGPGLLGSVFDGVQRPLSELAAREGDFLGRGASLPALDRARAWEFEPAVAPGDRVEGGVRLGVARAPGAPDHPVVVPPGVAGRVAEVRAGARRVEEPAVLLEGGATLALLERWPVRRPRPARRRLPPDVPFLTGQRVLDCFFPVSAGGTAVVPGGFGTGKTVLEQSLAKWAAADVVVYVGCGERGNEMSEVLDEFPRLEDPRTGGPLLARTVMIVNTSNMPVAAREASIYTGAAIAEYFRDMGRSVALMIDSTSRWAEALREISARLEEMPGEEGYPTYLASRLARFYERAGRVETLGGAEGAVTMVGAVSPPGGDLSEPVTQCSLRATGALWALSADLAHRRHYPAVDWSVSFTLEGDRLAGWFEREAGDGFGALRDEARKLLQRERELAEVAELVGTESLQDAERLVLESARLLREGFLRQSALDPADATCPPAKAFEMLRLFLEWHRRAGAAIGAGVPLRSILDTGLGARLLRLGQLPAAEVPAAAAALRADLSEALARMEAE.

G227 to T234 is a binding site for ATP.

This sequence belongs to the ATPase alpha/beta chains family.

It catalyses the reaction ATP + H2O + 4 H(+)(in) = ADP + phosphate + 5 H(+)(out). Its function is as follows. Produces ATP from ADP in the presence of a proton gradient across the membrane. The V-type alpha chain is a catalytic subunit. The polypeptide is V-type ATP synthase alpha chain (Anaeromyxobacter dehalogenans (strain 2CP-C)).